The primary structure comprises 223 residues: Thymidine kinase (223 aa).

Residues 19 to 26 (GPMFAGKT) and 96 to 99 (DEVQ) contribute to the ATP site. The active-site Proton acceptor is the E97. 4 residues coordinate Zn(2+): C153, C156, C191, and H194.

Belongs to the thymidine kinase family. Homotetramer.

The protein localises to the cytoplasm. It carries out the reaction thymidine + ATP = dTMP + ADP + H(+). This is Thymidine kinase from Ureaplasma parvum serovar 3 (strain ATCC 27815 / 27 / NCTC 11736).